We begin with the raw amino-acid sequence, 726 residues long: MAPAKWLIASLAFASTGLAFTPEDFISAPRRGEAIPDPKGQFAVFPVSKYNFDTKDRPSGWNLLNLKTGDISVLTTDADVSEITWLGEGTNLLYVNGTDSVKGGVGIWISDAKNFGNAYKAGSIPGAFQGFKLAKSGDKINFVGYGQSTTKGDLYNEAAIEKPVSSARIYDSLFVRHWDAYVGTQFNAVFSGALTKNGNKYSFDGKLKNLVQPVKYAESPYPPFGGSGDYDLSPDGKTVAFMSKAPELPKANLTTSYIFTVPHDGSKVAEPINKRNGPRTPHGIEGASSSPVFSPDSKRIAYLQMATKNYESDRRVIHIAEVGSNKPAQRIASNWDRSPESIKWSSDGRTLYVTAEEHATGKLFTLPSDARDNHMPSAVKHDGSVSAFSFVGSSKSVLITGNSLWSNALYQIATPGRPNRKLFYANEHDPQLKGLGPNDIEPLWVDGARTKIHSWIVKPTGFDKNKVYPLAFLIHGGPQGSWGDNWSTRWNPRVWADQGYVVIAPNPTGSTGFGQKLTDDITNDWGGAPYKDLFKIWEHVRDNLKYVDTDNGIAAGASFGGFMINWIQGQELGRKFKALVSHDGTFVGSSKIGTDELFFIEHDFNGTFFEARQNYDRWDCSKPEYVAKWSTPQLVVHSDYDFRLSVAEGVGLFNVLQEKGVPSRLLNFPDESHWVTKPENSLVWHQQVLGWINKFSGINKSNPKAIKLSDCKVEVIDHEAGSYFDY.

The first 19 residues, 1-19 (MAPAKWLIASLAFASTGLA), serve as a signal peptide directing secretion. N-linked (GlcNAc...) asparagine glycosylation is found at Asn-96 and Asn-252. The tract at residues 268–292 (VAEPINKRNGPRTPHGIEGASSSPV) is disordered. N-linked (GlcNAc...) asparagine glycosylation occurs at Asn-485. The active-site Charge relay system is the Ser-558. N-linked (GlcNAc...) asparagine glycosylation occurs at Asn-605. Catalysis depends on charge relay system residues Asp-641 and His-673. Asn-699 is a glycosylation site (N-linked (GlcNAc...) asparagine).

The protein belongs to the peptidase S9C family.

The protein resides in the secreted. Its function is as follows. Extracellular dipeptidyl-peptidase which removes N-terminal dipeptides sequentially from polypeptides having unsubstituted N-termini. Contributes to pathogenicity. This Arthroderma otae (strain ATCC MYA-4605 / CBS 113480) (Microsporum canis) protein is Dipeptidyl-peptidase 5 (DPP5).